A 345-amino-acid polypeptide reads, in one-letter code: Phosphate acyltransferase (345 aa).

Belongs to the PlsX family. Homodimer. Probably interacts with PlsY.

The protein resides in the cytoplasm. The enzyme catalyses a fatty acyl-[ACP] + phosphate = an acyl phosphate + holo-[ACP]. It participates in lipid metabolism; phospholipid metabolism. Its function is as follows. Catalyzes the reversible formation of acyl-phosphate (acyl-PO(4)) from acyl-[acyl-carrier-protein] (acyl-ACP). This enzyme utilizes acyl-ACP as fatty acyl donor, but not acyl-CoA. This is Phosphate acyltransferase from Limosilactobacillus fermentum (strain NBRC 3956 / LMG 18251) (Lactobacillus fermentum).